A 410-amino-acid chain; its full sequence is Shaggy-related protein kinase epsilon (410 aa).

Alanine 2 is modified (N-acetylalanine). The region spanning 74-358 is the Protein kinase domain; the sequence is YMAERIVGQG…AMEAIVHPFF (285 aa). ATP is bound by residues 80–88 and lysine 103; that span reads VGQGSFGIV. The active-site Proton acceptor is the aspartate 199. Tyrosine 234 carries the phosphotyrosine modification.

The protein belongs to the protein kinase superfamily. CMGC Ser/Thr protein kinase family. GSK-3 subfamily. As to quaternary structure, binds to KIB1. Autophosphorylated mainly on threonine and serine residues.

It carries out the reaction L-seryl-[protein] + ATP = O-phospho-L-seryl-[protein] + ADP + H(+). It catalyses the reaction L-threonyl-[protein] + ATP = O-phospho-L-threonyl-[protein] + ADP + H(+). In terms of biological role, may mediate extracellular signals to regulate transcription in differentiating cells. In Arabidopsis thaliana (Mouse-ear cress), this protein is Shaggy-related protein kinase epsilon (ASK5).